The chain runs to 186 residues: Small ribosomal subunit protein uS19 (186 aa).

Residues 1–95 (MREAIKRYGS…YEELYAQYKQ (95 aa)) form a unknown region. A small ribosomal subunit protein uS19 region spans residues 96–186 (MTEKKAYVDP…EKTAKVVKKK (91 aa)).

Belongs to the universal ribosomal protein uS19 family.

Its function is as follows. Protein S19 forms a complex with S13 that binds strongly to the 16S ribosomal RNA. This is Small ribosomal subunit protein uS19 from Aquifex aeolicus (strain VF5).